The sequence spans 343 residues: NADH-ubiquinone oxidoreductase chain 2 (343 aa).

8 consecutive transmembrane segments (helical) span residues 1–21 (MNPM…TMIT), 59–81 (YYLI…ALNT), 96–116 (TIIT…SWLP), 150–170 (NITL…LGSL), 178–198 (LMAF…TMAP), 200–220 (ISTL…LLIN), 241–261 (MTIL…SGFM), and 270–290 (LISM…LLSL).

The protein belongs to the complex I subunit 2 family.

It localises to the mitochondrion inner membrane. The catalysed reaction is a ubiquinone + NADH + 5 H(+)(in) = a ubiquinol + NAD(+) + 4 H(+)(out). Core subunit of the mitochondrial membrane respiratory chain NADH dehydrogenase (Complex I) that is believed to belong to the minimal assembly required for catalysis. Complex I functions in the transfer of electrons from NADH to the respiratory chain. The immediate electron acceptor for the enzyme is believed to be ubiquinone. The sequence is that of NADH-ubiquinone oxidoreductase chain 2 (MT-ND2) from Lycodon semicarinatus (Ryukyu odd-tooth snake).